Consider the following 484-residue polypeptide: Glutelin type-D 1 (484 aa).

Residues 1–27 (MATTTSLLSSCLCALLLAPLFSQGVDA) form the signal peptide. Cystine bridges form between C38–C71 and C114–C292. 2 consecutive Cupin type-1 domains span residues 43–238 (LQAF…EASK) and 298–447 (VNIE…DEAR).

Belongs to the 11S seed storage protein (globulins) family. Hexamer; each subunit is composed of an acidic and a basic chain derived from a single precursor and linked by a disulfide bond.

Its subcellular location is the protein storage vacuole. Functionally, seed storage protein. This chain is Glutelin type-D 1, found in Oryza sativa subsp. japonica (Rice).